A 151-amino-acid polypeptide reads, in one-letter code: Ribonuclease H (151 aa).

The 142-residue stretch at serine 2 to aspartate 143 folds into the RNase H type-1 domain. The Mg(2+) site is built by aspartate 11, glutamate 49, aspartate 71, and aspartate 135.

This sequence belongs to the RNase H family. As to quaternary structure, monomer. The cofactor is Mg(2+).

Its subcellular location is the cytoplasm. The catalysed reaction is Endonucleolytic cleavage to 5'-phosphomonoester.. Its function is as follows. Endonuclease that specifically degrades the RNA of RNA-DNA hybrids. This is Ribonuclease H from Methylobacillus flagellatus (strain ATCC 51484 / DSM 6875 / VKM B-1610 / KT).